The following is a 386-amino-acid chain: Succinate--CoA ligase [ADP-forming] subunit beta (386 aa).

Positions 9 to 244 constitute an ATP-grasp domain; it reads KELLKQFGVP…LDEEDPAEIE (236 aa). Residues K46, 53–55, E99, A102, and E107 each bind ATP; that span reads GRG. Mg(2+)-binding residues include N199 and D213. Residues N264 and 321 to 323 contribute to the substrate site; that span reads GIM.

The protein belongs to the succinate/malate CoA ligase beta subunit family. Heterotetramer of two alpha and two beta subunits. It depends on Mg(2+) as a cofactor.

It carries out the reaction succinate + ATP + CoA = succinyl-CoA + ADP + phosphate. The catalysed reaction is GTP + succinate + CoA = succinyl-CoA + GDP + phosphate. The protein operates within carbohydrate metabolism; tricarboxylic acid cycle; succinate from succinyl-CoA (ligase route): step 1/1. In terms of biological role, succinyl-CoA synthetase functions in the citric acid cycle (TCA), coupling the hydrolysis of succinyl-CoA to the synthesis of either ATP or GTP and thus represents the only step of substrate-level phosphorylation in the TCA. The beta subunit provides nucleotide specificity of the enzyme and binds the substrate succinate, while the binding sites for coenzyme A and phosphate are found in the alpha subunit. This is Succinate--CoA ligase [ADP-forming] subunit beta from Bordetella avium (strain 197N).